The primary structure comprises 177 residues: MSRVAKNPVTVPAGVEVKFGAEALVIKGKNGELSFPLHSDVAIEFNDGKLTFVANNSSKQANAMSGTARALVSNMVKGVSEGFEKRLQLIGVGYRAQAQGKILNLSLGFSHPIVYEMPEGVSVQTPSQTEIVLTGSDKQVVGQVAAEIRAFRAPEPYKGKGVRYVGEVVVMKEAKKK.

This sequence belongs to the universal ribosomal protein uL6 family. As to quaternary structure, part of the 50S ribosomal subunit.

This protein binds to the 23S rRNA, and is important in its secondary structure. It is located near the subunit interface in the base of the L7/L12 stalk, and near the tRNA binding site of the peptidyltransferase center. This chain is Large ribosomal subunit protein uL6, found in Neisseria meningitidis serogroup B (strain ATCC BAA-335 / MC58).